The following is a 482-amino-acid chain: ATP-dependent rRNA helicase rrp3 (482 aa).

Positions 1–55 are disordered; it reads MSSVKRRKTEKNTSSGLKSKQAKEPKEASPLSSPEPTEENQNNEIEEGTEEEEVT. Acidic residues predominate over residues 44–53; that stretch reads EIEEGTEEEE. Residues 56-84 carry the Q motif motif; that stretch reads KSFKDLGIVDSLCEACDTLGYKAPTPIQR. Residues 87–258 enclose the Helicase ATP-binding domain; it reads IPLALQGRDL…RASLKDPLRV (172 aa). 100 to 107 is an ATP binding site; that stretch reads AETGSGKT. Residues 206–209 carry the DEAD box motif; it reads DEAD. A Helicase C-terminal domain is found at 282-430; sequence HKDTYLIYLL…EYQTVKDEVM (149 aa). Composition is skewed to basic and acidic residues over residues 444-456 and 472-482; these read RNEM…DRGK and RGRDEMDREEG. A disordered region spans residues 444 to 482; it reads RNEMKNLHEDRGKKGAVLKGRRPANGAKRGRDEMDREEG.

Belongs to the DEAD box helicase family. DDX47/RRP3 subfamily. In terms of assembly, interacts with the SSU processome.

It localises to the nucleus. It carries out the reaction ATP + H2O = ADP + phosphate + H(+). ATP-dependent rRNA helicase required for pre-ribosomal RNA processing. Involved in the maturation of the 35S-pre-rRNA and to its cleavage to mature 18S rRNA. The polypeptide is ATP-dependent rRNA helicase rrp3 (Sclerotinia sclerotiorum (strain ATCC 18683 / 1980 / Ss-1) (White mold)).